Reading from the N-terminus, the 200-residue chain is MGLSPGSAKLGSPAQPLIAPAATGILDPRTGRPVGADDRFFVEVNNELSDKGFFVAATDDLITWARTGSLMWMTFGLACCAVEMMQMSMPRYDAERFGFAPRASPRQSDVMIVAGTLTNKMAPALRKVYDQMPEPRYVISMGSCANGGGYYHYSYAVVRGCDRIVPIDIYVPGCPPTAEALLYGVMLLQKKIRRIGTIER.

[4Fe-4S] cluster is bound by residues Cys-79, Cys-80, Cys-144, and Cys-174.

This sequence belongs to the complex I 20 kDa subunit family. As to quaternary structure, NDH-1 is composed of 14 different subunits. Subunits NuoB, C, D, E, F, and G constitute the peripheral sector of the complex. [4Fe-4S] cluster is required as a cofactor.

Its subcellular location is the cell inner membrane. It catalyses the reaction a quinone + NADH + 5 H(+)(in) = a quinol + NAD(+) + 4 H(+)(out). In terms of biological role, NDH-1 shuttles electrons from NADH, via FMN and iron-sulfur (Fe-S) centers, to quinones in the respiratory chain. The immediate electron acceptor for the enzyme in this species is believed to be ubiquinone. Couples the redox reaction to proton translocation (for every two electrons transferred, four hydrogen ions are translocated across the cytoplasmic membrane), and thus conserves the redox energy in a proton gradient. This Rhodopseudomonas palustris (strain BisA53) protein is NADH-quinone oxidoreductase subunit B 2.